Reading from the N-terminus, the 242-residue chain is Proteasome subunit alpha (242 aa).

This sequence belongs to the peptidase T1A family. In terms of assembly, the 20S proteasome core is composed of 14 alpha and 14 beta subunits that assemble into four stacked heptameric rings, resulting in a barrel-shaped structure. The two inner rings, each composed of seven catalytic beta subunits, are sandwiched by two outer rings, each composed of seven alpha subunits. The catalytic chamber with the active sites is on the inside of the barrel. Has a gated structure, the ends of the cylinder being occluded by the N-termini of the alpha-subunits. Is capped by the proteasome-associated ATPase, ARC.

It localises to the cytoplasm. It participates in protein degradation; proteasomal Pup-dependent pathway. The formation of the proteasomal ATPase ARC-20S proteasome complex, likely via the docking of the C-termini of ARC into the intersubunit pockets in the alpha-rings, may trigger opening of the gate for substrate entry. Interconversion between the open-gate and close-gate conformations leads to a dynamic regulation of the 20S proteasome proteolysis activity. In terms of biological role, component of the proteasome core, a large protease complex with broad specificity involved in protein degradation. This Renibacterium salmoninarum (strain ATCC 33209 / DSM 20767 / JCM 11484 / NBRC 15589 / NCIMB 2235) protein is Proteasome subunit alpha.